The following is a 570-amino-acid chain: MKPIKDLVEVALGKKPADLVLKNAQVFNSFTGEFVTGDVAVVAGYIAGTGEYEGKTTYDLQGAYVTPGFIDGHVHIESSMVAPAEFARALVPAGTLTAVVDPHEIANVSGTAGIRYMLEASSNLPINIYLMLPSCVPATSLETAGAVLTARELSEFINHPRVLGLGELMDYPGVLNTHEEMLKKLAVTEGKLIDGHAPGISGKELTAYIAAGVNSEHECTTAEEARERLSRGMYLMLREGSATKNLLDLLPAVDRYTASRCFFVTDDRHPEDLIKLGSINHMVKLAVSAGADLPTVLQMATINAANYFRLYDLGAIAPGYRADILVFEDLQEFKPKYVFKDGKLVAENGKPLFTGYPVDDRAVRNTMRLKEINPEKLKIPAKSNRARVIGLIPHQIVTKKLELEVPVEGGYFKTSTEKDIAKLAVFERHNYTGNVGVGLIHGLGLKKGAIASTVAHDSHNLVVAGMSDEDIIAAVEELKRIGGGLTVVADGQVLGSLPLPIAGLMSDRTLYEVQEELEKLHRIVRNLGVSENYDPFMTLAFLSLPVIPELKLTDLGLVDVSTFSVVPVSL.

It belongs to the metallo-dependent hydrolases superfamily. Adenine deaminase family. The cofactor is Mn(2+).

The enzyme catalyses adenine + H2O + H(+) = hypoxanthine + NH4(+). This Carboxydothermus hydrogenoformans (strain ATCC BAA-161 / DSM 6008 / Z-2901) protein is Adenine deaminase 2.